We begin with the raw amino-acid sequence, 202 residues long: Protein Thf1 (202 aa).

Positions 174–202 (IYKSSILKMEQAKELLQEAKIKDKKEKKK) form a coiled coil.

Belongs to the THF1 family.

Its function is as follows. May be involved in photosynthetic membrane biogenesis. This Prochlorococcus marinus subsp. pastoris (strain CCMP1986 / NIES-2087 / MED4) protein is Protein Thf1.